The chain runs to 100 residues: Urease subunit gamma (100 aa).

It belongs to the urease gamma subunit family. Heterotrimer of UreA (gamma), UreB (beta) and UreC (alpha) subunits. Three heterotrimers associate to form the active enzyme.

The protein localises to the cytoplasm. It carries out the reaction urea + 2 H2O + H(+) = hydrogencarbonate + 2 NH4(+). Its pathway is nitrogen metabolism; urea degradation; CO(2) and NH(3) from urea (urease route): step 1/1. The chain is Urease subunit gamma from Arthrobacter sp. (strain FB24).